We begin with the raw amino-acid sequence, 142 residues long: Transcriptional regulator MraZ (142 aa).

SpoVT-AbrB domains are found at residues 5-51 and 77-120; these read ASAL…PRPE and AMDV…DAQT.

The protein belongs to the MraZ family. As to quaternary structure, forms oligomers.

It is found in the cytoplasm. It localises to the nucleoid. This is Transcriptional regulator MraZ from Burkholderia mallei (strain NCTC 10247).